The chain runs to 205 residues: COP9 signalosome complex subunit 7 (205 aa).

Residues 1–135 form the PCI domain; it reads MEEKISQAID…QTLHVSWALE (135 aa). Serine 183 carries the post-translational modification Phosphoserine.

The protein belongs to the CSN7/EIF3M family. CSN7 subfamily. Component of the COP9 signalosome (CSN) complex.

Component of the COP9 signalosome (CSN) complex that acts as an regulator of the ubiquitin (Ubl) conjugation pathway by mediating the deneddylation of the cullin subunit of SCF-type E3 ubiquitin-protein ligase complexes. The polypeptide is COP9 signalosome complex subunit 7 (csn71) (Schizosaccharomyces pombe (strain 972 / ATCC 24843) (Fission yeast)).